Reading from the N-terminus, the 193-residue chain is Mesogenin-1 (193 aa).

The interval 34–59 (GPFELNQASPSQSLSPAPSLESYSSS) is disordered. The span at 40–59 (QASPSQSLSPAPSLESYSSS) shows a compositional bias: low complexity. Residues 124-178 (QRRRKASEREKLRMRTLADALHTLRNYLPPVYSQRGQPLTKIQTLKYTIKYIGEL) form the bHLH domain.

It is found in the nucleus. In terms of biological role, involved in specifying the paraxial, but not dorsal, mesoderm. May regulate the expression of T-box transcription factors required for mesoderm formation and differentiation. The sequence is that of Mesogenin-1 (MSGN1) from Homo sapiens (Human).